A 394-amino-acid polypeptide reads, in one-letter code: MTSIQQRDAQSVLAAIDNLLPEIRDRAQATEDLRRLPDETVKALDDVGFFTLLQPQQWGGLQCDPALFFEATRRLASVCGSTGWVSSIVGVHNWHLALFDQRAQEEVWGEDPSTRISSSYAPMGAGVVVDGGYLVNGSWNWSSGCDHASWTFVGGPVIKDGRPVDFGSFLIPRSEYEIKDVWYVVGLRGTGSNTLVVKDVFVPRHRFLSYKAMNDHTAGGLATNSAPVYKMPWGTMHPTTISAPIVGMAYGAYAAHVEHQGKRVRAAFAGEKAKDDPFAKVRIAEAASDIDAAWRQLIGNVSDEYALLAAGKEIPFELRARARRDQVRATGRSIASIDRLFEASGATALSNEAPIQRFWRDAHAGRVHAANDPERAYVIFGNHEFGLPPGDTMV.

Residues W84, 118–120 (SSY), 141–143 (WSS), R263, 346–347 (AT), and 368–369 (HA) contribute to the FMN site.

It belongs to the HpaH/HsaA monooxygenase family. In terms of assembly, homotetramer under anaerobic conditions. HsaAB monooxygenase consists of an oxygenase component HsaA and a reductase component HsaB.

It catalyses the reaction 3-hydroxy-9,10-secoandrosta-1,3,5(10)-triene-9,17-dione + FMNH2 + O2 = 3,4-dihydroxy-9,10-secoandrosta-1,3,5(10)-triene-9,17-dione + FMN + H2O + H(+). Its pathway is lipid metabolism; steroid biosynthesis. In terms of biological role, catalyzes the o-hydroxylation of 3-hydroxy-9,10-secoandrosta-1,3,5(10)-triene-9,17-dione (3-HSA) to 3,4-dihydroxy-9,10-secoandrosta-1,3,5(10)-triene-9,17-dione (3,4-DHSA) in the catabolism of cholesterol. The sequence is that of Flavin-dependent monooxygenase, oxygenase subunit HsaA from Mycobacterium tuberculosis (strain CDC 1551 / Oshkosh).